The chain runs to 326 residues: Transposase InsH for insertion sequence element IS5H (326 aa).

The protein belongs to the transposase 11 family.

Its function is as follows. Involved in the transposition of the insertion sequence IS5. This chain is Transposase InsH for insertion sequence element IS5H (insH6), found in Escherichia coli (strain K12).